The primary structure comprises 386 residues: MATKRDYYEVLGVDKGASDDEIKKAYRKLSKKYHPDVNQEADAEEKFKKFQKPMNTLSDPQKRAAYDQYGHAGADANFGGGGAGGFGGFGGGFSDAGGFGGFEDIFESFFGGGRSADPNAPRQGDDLQYSINLTFEEAVFGKDTEVSYKRNEVCHTCGGNGAKPGTQPETCHKCKGSGTINAERQTPLGRVMTRQTCDVCHGTGKEIKEVCETCHGTGHEKKTHSVNVSVPAGVEDGQQMRLANQGEAGTNGGPYGDLYVVLYCSHETCNIFDRDGSEIYYELPINFVQAALGDEVDVPTVHGNVKLKIPAGTQTSTKFRLRGKGAPRLRGNSTGDQQVTVKIITPKNLNEEQREALRNFAELTGQSTEEQQSEGFFDKMKDAFKK.

A J domain is found at 6-70; it reads DYYEVLGVDK…QKRAAYDQYG (65 aa). Residues 141–223 form a CR-type zinc finger; the sequence is GKDTEVSYKR…CHGTGHEKKT (83 aa). 8 residues coordinate Zn(2+): cysteine 154, cysteine 157, cysteine 171, cysteine 174, cysteine 197, cysteine 200, cysteine 211, and cysteine 214. CXXCXGXG motif repeat units lie at residues 154-161, 171-178, 197-204, and 211-218; these read CHTCGGNG, CHKCKGSG, CDVCHGTG, and CETCHGTG. Positions 363-386 are disordered; the sequence is LTGQSTEEQQSEGFFDKMKDAFKK. Polar residues predominate over residues 364–374; that stretch reads TGQSTEEQQSE. Residues 376–386 are compositionally biased toward basic and acidic residues; the sequence is FFDKMKDAFKK.

The protein belongs to the DnaJ family. Homodimer. Zn(2+) is required as a cofactor.

Its subcellular location is the cytoplasm. Functionally, participates actively in the response to hyperosmotic and heat shock by preventing the aggregation of stress-denatured proteins and by disaggregating proteins, also in an autonomous, DnaK-independent fashion. Unfolded proteins bind initially to DnaJ; upon interaction with the DnaJ-bound protein, DnaK hydrolyzes its bound ATP, resulting in the formation of a stable complex. GrpE releases ADP from DnaK; ATP binding to DnaK triggers the release of the substrate protein, thus completing the reaction cycle. Several rounds of ATP-dependent interactions between DnaJ, DnaK and GrpE are required for fully efficient folding. Also involved, together with DnaK and GrpE, in the DNA replication of plasmids through activation of initiation proteins. The protein is Chaperone protein DnaJ of Tetragenococcus halophilus (Pediococcus halophilus).